Consider the following 239-residue polypeptide: Tetratricopeptide repeat protein 9B (239 aa).

Disordered stretches follow at residues 1–57 (MQRG…LGAA) and 99–126 (QGARPSGLPAPAPGPTSSPGPARLSEEQ). Residues S7 and S27 each carry the phosphoserine modification. Residues 16 to 31 (PEPPPRPPPALSPPGS) are compositionally biased toward pro residues. The TPR 1 repeat unit spans residues 65–99 (AVAFKAEGQRCYREKKFREAIGKYHRALLQLKAAQ). Over residues 106–116 (LPAPAPGPTSS) the composition is skewed to pro residues. A TPR 2 repeat occupies 171-204 (FKATYRAGIAFYHLGDYARALRYLQEARSREPTD).

Belongs to the TTC9 family.

The protein is Tetratricopeptide repeat protein 9B (TTC9B) of Homo sapiens (Human).